An 860-amino-acid chain; its full sequence is Transcription factor E2F8 (860 aa).

Disordered regions lie at residues 1–27 and 38–57; these read MENQKENLFSEPHKRGLMKSPLHPSSK and DLGPLTTPTKPKEVSQGEPW. S71 and S102 each carry phosphoserine. 2 consecutive DNA-binding regions follow at residues 113-182 and 261-347; these read RKEK…TWHG and RKDK…KWTG. 3 disordered regions span residues 407–433, 532–616, and 745–803; these read RRKISSAPSSPVKSNKAESSQNSPPVP, LTPP…PKED, and QMSA…QPVP. 2 positions are modified to phosphoserine: S412 and S416. Composition is skewed to polar residues over residues 412-429 and 542-554; these read SAPSSPVKSNKAESSQNS and VCPTQPSNATGSK. The segment covering 555–565 has biased composition (basic and acidic residues); it reads DPTDAPAEKTA.

It belongs to the E2F/DP family. In terms of assembly, interacts with HIF1A. Homodimer and heterodimer: mainly forms homodimers and, to a lesser extent, heterodimers with E2F8. Dimerization is important for DNA-binding. As to expression, highly expressed in liver, skin, thymus and testis. Expressed in trophoblast giant cells throughout placenta development (at protein level).

The protein localises to the nucleus. Its function is as follows. Atypical E2F transcription factor that participates in various processes such as angiogenesis and polyploidization of specialized cells. Mainly acts as a transcription repressor that binds DNA independently of DP proteins and specifically recognizes the E2 recognition site 5'-TTTC[CG]CGC-3'. Directly represses transcription of classical E2F transcription factors such as E2F1: component of a feedback loop in S phase by repressing the expression of E2F1, thereby preventing p53/TP53-dependent apoptosis. Plays a key role in polyploidization of cells in placenta and liver by regulating the endocycle, probably by repressing genes promoting cytokinesis and antagonizing action of classical E2F proteins (E2F1, E2F2 and/or E2F3). Required for placental development by promoting polyploidization of trophoblast giant cells. Acts as a promoter of sprouting angiogenesis, possibly by acting as a transcription activator: associates with HIF1A, recognizes and binds the VEGFA promoter, which is different from canonical E2 recognition site, and activates expression of the VEGFA gene. This chain is Transcription factor E2F8 (E2f8), found in Mus musculus (Mouse).